A 481-amino-acid chain; its full sequence is Inosine-5'-monophosphate dehydrogenase (481 aa).

2 consecutive CBS domains span residues 92–148 (VIND…SKKV) and 152–209 (MTKM…PEAN). NAD(+) is bound by residues Asp-244 and 293 to 295 (GIG). K(+)-binding residues include Gly-295 and Gly-297. Ser-298 contacts IMP. Position 300 (Cys-300) interacts with K(+). Cys-300 functions as the Thioimidate intermediate in the catalytic mechanism. Residues 333–335 (DGG), 356–357 (GS), and 380–384 (YRGMG) contribute to the IMP site. Catalysis depends on Arg-396, which acts as the Proton acceptor. Glu-410 is a binding site for IMP. 3 residues coordinate K(+): Glu-464, Ser-465, and His-466.

It belongs to the IMPDH/GMPR family. In terms of assembly, homotetramer. It depends on K(+) as a cofactor.

It catalyses the reaction IMP + NAD(+) + H2O = XMP + NADH + H(+). It participates in purine metabolism; XMP biosynthesis via de novo pathway; XMP from IMP: step 1/1. Its activity is regulated as follows. Mycophenolic acid (MPA) is a non-competitive inhibitor that prevents formation of the closed enzyme conformation by binding to the same site as the amobile flap. In contrast, mizoribine monophosphate (MZP) is a competitive inhibitor that induces the closed conformation. MPA is a potent inhibitor of mammalian IMPDHs but a poor inhibitor of the bacterial enzymes. MZP is a more potent inhibitor of bacterial IMPDH. Functionally, catalyzes the conversion of inosine 5'-phosphate (IMP) to xanthosine 5'-phosphate (XMP), the first committed and rate-limiting step in the de novo synthesis of guanine nucleotides, and therefore plays an important role in the regulation of cell growth. The polypeptide is Inosine-5'-monophosphate dehydrogenase (Helicobacter pylori (strain J99 / ATCC 700824) (Campylobacter pylori J99)).